A 597-amino-acid chain; its full sequence is TOX high mobility group box family member 4 (597 aa).

Disordered regions lie at residues 160 to 224 (GAIL…EPQK) and 520 to 546 (VQEESPPPQMDVELVSSSPPPSLSPQP). A compositionally biased stretch (basic residues) spans 207–217 (KPKTPKKKKKK). The short motif at 212–217 (KKKKKK) is the Nuclear localization signal element. A DNA-binding region (HMG box) is located at residues 222-290 (PQKPLSAYAL…EYLKALALYK (69 aa)).

Component of the PNUTS-PP1 phosphatase complex.

Its subcellular location is the nucleus. It localises to the chromosome. In terms of biological role, transcription factor that modulates cell fate reprogramming from the somatic state to the pluripotent and neuronal fate. Also acts as a regulatory component of protein phosphatase 1 (PP1) complexes. Component of the PNUTS-PP1 protein phosphatase complex, a PP1 complex that regulates RNA polymerase II transcription pause-release. PNUTS-PP1 also plays a role in the control of chromatin structure and cell cycle progression during the transition from mitosis into interphase. This is TOX high mobility group box family member 4 (tox4) from Xenopus tropicalis (Western clawed frog).